Consider the following 211-residue polypeptide: Thiamine-phosphate synthase (211 aa).

Residues 37 to 41 (QLRIK) and N69 contribute to the 4-amino-2-methyl-5-(diphosphooxymethyl)pyrimidine site. Residues D70 and D89 each contribute to the Mg(2+) site. Residue S108 participates in 4-amino-2-methyl-5-(diphosphooxymethyl)pyrimidine binding. 134-136 (TQT) lines the 2-[(2R,5Z)-2-carboxy-4-methylthiazol-5(2H)-ylidene]ethyl phosphate pocket. K137 is a 4-amino-2-methyl-5-(diphosphooxymethyl)pyrimidine binding site. 2-[(2R,5Z)-2-carboxy-4-methylthiazol-5(2H)-ylidene]ethyl phosphate is bound by residues G166 and 186-187 (IS).

This sequence belongs to the thiamine-phosphate synthase family. Requires Mg(2+) as cofactor.

It catalyses the reaction 2-[(2R,5Z)-2-carboxy-4-methylthiazol-5(2H)-ylidene]ethyl phosphate + 4-amino-2-methyl-5-(diphosphooxymethyl)pyrimidine + 2 H(+) = thiamine phosphate + CO2 + diphosphate. The catalysed reaction is 2-(2-carboxy-4-methylthiazol-5-yl)ethyl phosphate + 4-amino-2-methyl-5-(diphosphooxymethyl)pyrimidine + 2 H(+) = thiamine phosphate + CO2 + diphosphate. The enzyme catalyses 4-methyl-5-(2-phosphooxyethyl)-thiazole + 4-amino-2-methyl-5-(diphosphooxymethyl)pyrimidine + H(+) = thiamine phosphate + diphosphate. It participates in cofactor biosynthesis; thiamine diphosphate biosynthesis; thiamine phosphate from 4-amino-2-methyl-5-diphosphomethylpyrimidine and 4-methyl-5-(2-phosphoethyl)-thiazole: step 1/1. Functionally, condenses 4-methyl-5-(beta-hydroxyethyl)thiazole monophosphate (THZ-P) and 2-methyl-4-amino-5-hydroxymethyl pyrimidine pyrophosphate (HMP-PP) to form thiamine monophosphate (TMP). The sequence is that of Thiamine-phosphate synthase from Shigella boydii serotype 4 (strain Sb227).